The primary structure comprises 242 residues: uncharacterized protein (242 aa).

The 114-residue stretch at 3–116 (TALVIDDEQF…RLNKTVKRLN (114 aa)) folds into the Response regulatory domain. Asp54 carries the 4-aspartylphosphate modification. One can recognise an HTH LytTR-type domain in the interval 139–240 (IPCIGHNRIV…LKVLKEMLGI (102 aa)).

This is an uncharacterized protein from Vibrio parahaemolyticus serotype O3:K6 (strain RIMD 2210633).